The chain runs to 152 residues: Small ribosomal subunit protein uS19 (152 aa).

It belongs to the universal ribosomal protein uS19 family.

In Podospora anserina (Pleurage anserina), this protein is Small ribosomal subunit protein uS19 (RPS15).